The following is a 461-amino-acid chain: MRVLIKNGTVVNADGQAKQDLLIESGIVRQLGNNISPQLPYEEIDATGCYVFPGGVDVHTHFNIDVGIARSCDDFFTGTRAAACGGTTTIIDHMGFGPNGCRLRHQLEVYRGYAAHKAVIDYSFHGVIQHINHAILDEIPMIVEEGLSSFKLYLTYQYKLNDDEVLQALRRLHESGALTTVHPENDAAIASKRAEFIAAGLTAPRYHALSRPLECEAEAIARMINLAQIAGNAPLYIVHLSNGLGLDYLRLARANHQPVWVETCPQYLLLDERSYDTEDGMKFILSPPLRNVREQDKLWCGISDGAIDVVATDHCTFSMAQRLQISKGDFSRCPNGLPGVENRMQLLFSSGVMTGRITPERFVELTSAMPARLFGLWPQKGLLAPGSDGDVVIIDPRQSQQIQHRHLHDNADYSPWEGFTCQGAIVRTLSRGETIFCDGTFTGKAGRGRFLRRKPFVPPVL.

A divalent metal cation-binding residues include His59, His61, and Lys151. At Lys151 the chain carries N6-carboxylysine. Tyr156 contributes to the substrate binding site. 2 residues coordinate a divalent metal cation: His182 and His239. Ser286 provides a ligand contact to substrate. Position 313 (Asp313) interacts with a divalent metal cation. Asn335 serves as a coordination point for substrate.

It belongs to the metallo-dependent hydrolases superfamily. Hydantoinase/dihydropyrimidinase family. Homotetramer. Zn(2+) is required as a cofactor. Ni(2+) serves as cofactor. The cofactor is Co(2+). Requires Mn(2+) as cofactor. In terms of processing, carboxylation allows a single lysine to coordinate two divalent metal cations.

It catalyses the reaction D-5-phenylhydantoin + H2O = N-carbamoyl-D-phenylglycine + H(+). Its function is as follows. Catalyzes the stereospecific hydrolysis of the cyclic amide bond of D-hydantoin derivatives with an aromatic side chains at the 5'-position. Has no activity on dihydropyrimidines. The physiological function is unknown. In Escherichia coli (strain K12), this protein is D-phenylhydantoinase (hyuA).